Reading from the N-terminus, the 437-residue chain is Trigger factor (437 aa).

The PPIase FKBP-type domain occupies 161–246 (DDQVNIDFVG…VNSVSAPVLP (86 aa)).

It belongs to the FKBP-type PPIase family. Tig subfamily.

The protein localises to the cytoplasm. It carries out the reaction [protein]-peptidylproline (omega=180) = [protein]-peptidylproline (omega=0). Involved in protein export. Acts as a chaperone by maintaining the newly synthesized protein in an open conformation. Functions as a peptidyl-prolyl cis-trans isomerase. In Pseudomonas putida (strain ATCC 700007 / DSM 6899 / JCM 31910 / BCRC 17059 / LMG 24140 / F1), this protein is Trigger factor.